Here is a 184-residue protein sequence, read N- to C-terminus: Photosystem I assembly protein Ycf4 (184 aa).

2 consecutive transmembrane segments (helical) span residues 21–43 (NFCW…ISSY) and 68–90 (FYGI…NVGS).

Belongs to the Ycf4 family.

Its subcellular location is the plastid. The protein localises to the chloroplast thylakoid membrane. Functionally, seems to be required for the assembly of the photosystem I complex. This is Photosystem I assembly protein Ycf4 from Physcomitrium patens (Spreading-leaved earth moss).